The chain runs to 472 residues: Ribulose bisphosphate carboxylase large chain (472 aa).

Residues asparagine 120 and threonine 170 each contribute to the substrate site. The active-site Proton acceptor is the lysine 172. Lysine 174 provides a ligand contact to substrate. Mg(2+)-binding residues include lysine 198, aspartate 200, and glutamate 201. N6-carboxylysine is present on lysine 198. The Proton acceptor role is filled by histidine 291. The substrate site is built by arginine 292, histidine 324, and serine 376. Positions 461–467 match the Interacts with RbcX2 motif; that stretch reads EIKFEFE.

The protein belongs to the RuBisCO large chain family. Type I subfamily. Heterohexadecamer of 8 large chains and 8 small chains; disulfide-linked. The disulfide link is formed within the large subunit homodimers. The exposed C-terminus binds in a cleft in the RbcX2 (shown with endogenous and Anabaena strain CA protein). RbcX2 is displaced by RbcS; as RbcX2 is removed RbcS mediates the ordering of an internal RbcL loop (Thr-64-Leu-70) in a catalytically active conformation. Mg(2+) serves as cofactor. Post-translationally, the disulfide bond which can form in the large chain dimeric partners within the hexadecamer appears to be associated with oxidative stress and protein turnover.

Its subcellular location is the carboxysome. The enzyme catalyses 2 (2R)-3-phosphoglycerate + 2 H(+) = D-ribulose 1,5-bisphosphate + CO2 + H2O. It carries out the reaction D-ribulose 1,5-bisphosphate + O2 = 2-phosphoglycolate + (2R)-3-phosphoglycerate + 2 H(+). RuBisCO catalyzes two reactions: the carboxylation of D-ribulose 1,5-bisphosphate, the primary event in carbon dioxide fixation, as well as the oxidative fragmentation of the pentose substrate in the photorespiration process. Both reactions occur simultaneously and in competition at the same active site. The protein is Ribulose bisphosphate carboxylase large chain (cbbL) of Synechococcus sp. (strain ATCC 27144 / PCC 6301 / SAUG 1402/1) (Anacystis nidulans).